Here is a 223-residue protein sequence, read N- to C-terminus: Small ribosomal subunit protein uS3 (223 aa).

The 77-residue stretch at 39–115 (IRKYIEKNLA…RVFINIVEIK (77 aa)) folds into the KH type-2 domain.

It belongs to the universal ribosomal protein uS3 family. As to quaternary structure, part of the 30S ribosomal subunit. Forms a tight complex with proteins S10 and S14.

Functionally, binds the lower part of the 30S subunit head. Binds mRNA in the 70S ribosome, positioning it for translation. This is Small ribosomal subunit protein uS3 from Leuconostoc mesenteroides subsp. mesenteroides (strain ATCC 8293 / DSM 20343 / BCRC 11652 / CCM 1803 / JCM 6124 / NCDO 523 / NBRC 100496 / NCIMB 8023 / NCTC 12954 / NRRL B-1118 / 37Y).